The chain runs to 505 residues: ATP synthase subunit beta (505 aa).

The tract at residues 1-25 (MAKAATPKETAAVKKPAAPKKAATA) is disordered. 183–190 (GGAGVGKT) serves as a coordination point for ATP.

It belongs to the ATPase alpha/beta chains family. In terms of assembly, F-type ATPases have 2 components, CF(1) - the catalytic core - and CF(0) - the membrane proton channel. CF(1) has five subunits: alpha(3), beta(3), gamma(1), delta(1), epsilon(1). CF(0) has three main subunits: a(1), b(2) and c(9-12). The alpha and beta chains form an alternating ring which encloses part of the gamma chain. CF(1) is attached to CF(0) by a central stalk formed by the gamma and epsilon chains, while a peripheral stalk is formed by the delta and b chains.

The protein resides in the cell inner membrane. The enzyme catalyses ATP + H2O + 4 H(+)(in) = ADP + phosphate + 5 H(+)(out). Produces ATP from ADP in the presence of a proton gradient across the membrane. The catalytic sites are hosted primarily by the beta subunits. This Sinorhizobium fredii (strain NBRC 101917 / NGR234) protein is ATP synthase subunit beta.